The chain runs to 57 residues: UPF0391 membrane protein Atu4467 (57 aa).

Transmembrane regions (helical) follow at residues 4–24 (WALIFFVISLIAGVFGFTGIS) and 33–53 (ILFFIAVVIFLVFLVLALMAG).

It belongs to the UPF0391 family.

The protein localises to the cell membrane. The protein is UPF0391 membrane protein Atu4467 of Agrobacterium fabrum (strain C58 / ATCC 33970) (Agrobacterium tumefaciens (strain C58)).